The chain runs to 572 residues: Putative two-component response regulator ARR13 (572 aa).

A Response regulatory domain is found at 17–134 (NVMVVDDNRV…DLPKIYQFAL (118 aa)). D71 bears the 4-aspartylphosphate mark. The segment at 175–225 (KKNCSSKSDTRTVNSTNVSHVSTNGSRKNRKRKPKGGPSDDGESLSQPPKK) is disordered. Residues 179–197 (SSKSDTRTVNSTNVSHVST) show a composition bias toward polar residues. Positions 224-227 (KKKK) match the Nuclear localization signal motif. Residues 227 to 277 (KIWWTNPLQDLFLQAIQHIGYDKVVPKKILAIMNVPYLTRENVASHLQKYR) constitute a DNA-binding region (myb-like GARP). A compositionally biased stretch (polar residues) spans 509–522 (NQDQSNGESSNTIA). The disordered stretch occupies residues 509–531 (NQDQSNGESSNTIATPETNTPNF).

The protein belongs to the ARR family. Type-B subfamily. In terms of assembly, binds the target DNA as a monomer. In terms of processing, two-component system major event consists of a His-to-Asp phosphorelay between a sensor histidine kinase (HK) and a response regulator (RR). In plants, the His-to-Asp phosphorelay involves an additional intermediate named Histidine-containing phosphotransfer protein (HPt). This multistep phosphorelay consists of a His-Asp-His-Asp sequential transfer of a phosphate group between first a His and an Asp of the HK protein, followed by the transfer to a conserved His of the HPt protein and finally the transfer to an Asp in the receiver domain of the RR protein.

The protein resides in the nucleus. In terms of biological role, putative transcriptional activator that binds specifically to the DNA sequence 5'-[AG]GATT-3'. Functions as a response regulator involved in His-to-Asp phosphorelay signal transduction system. Phosphorylation of the Asp residue in the receiver domain activates the ability of the protein to promote the transcription of target genes. Could directly activate some type-A response regulators in response to cytokinins. This is Putative two-component response regulator ARR13 (ARR13) from Arabidopsis thaliana (Mouse-ear cress).